Reading from the N-terminus, the 98-residue chain is uncharacterized protein (98 aa).

Belongs to the Rv1128c/1148c/1588c/1702c/1945/3466 family.

This is an uncharacterized protein from Mycobacterium tuberculosis (strain ATCC 25618 / H37Rv).